Here is a 149-residue protein sequence, read N- to C-terminus: Transcriptional regulator MraZ (149 aa).

2 consecutive SpoVT-AbrB domains span residues 7–54 (KYVN…GISH) and 83–126 (AVQL…QPQN).

The protein belongs to the MraZ family. Forms oligomers.

Its subcellular location is the cytoplasm. It localises to the nucleoid. The protein is Transcriptional regulator MraZ of Rickettsia rickettsii (strain Sheila Smith).